A 165-amino-acid chain; its full sequence is Protein SprT (165 aa).

The region spanning 20 to 163 is the SprT-like domain; sequence EKLAQANLKL…RCVHCGEQLV (144 aa). His78 contacts Zn(2+). Glu79 is an active-site residue. His82 provides a ligand contact to Zn(2+).

It belongs to the SprT family. The cofactor is Zn(2+).

It is found in the cytoplasm. This is Protein SprT from Shigella boydii serotype 18 (strain CDC 3083-94 / BS512).